We begin with the raw amino-acid sequence, 500 residues long: L-arabinose isomerase (500 aa).

Residues Glu306, Glu333, His349, and His448 each coordinate Mn(2+).

It belongs to the arabinose isomerase family. The cofactor is Mn(2+).

The enzyme catalyses beta-L-arabinopyranose = L-ribulose. It participates in carbohydrate degradation; L-arabinose degradation via L-ribulose; D-xylulose 5-phosphate from L-arabinose (bacterial route): step 1/3. In terms of biological role, catalyzes the conversion of L-arabinose to L-ribulose. The chain is L-arabinose isomerase from Koribacter versatilis (strain Ellin345).